The chain runs to 280 residues: Hemin import ATP-binding protein HmuV (280 aa).

The ABC transporter domain maps to 26–260 (LAAAGGLRVH…GLLSEVYDQP (235 aa)). Residue 59–66 (GPNGAGKS) participates in ATP binding.

This sequence belongs to the ABC transporter superfamily. Heme (hemin) importer (TC 3.A.1.14.5) family. The complex is composed of two ATP-binding proteins (HmuV), two transmembrane proteins (HmuU) and a solute-binding protein (HmuT).

It localises to the cell membrane. Functionally, part of the ABC transporter complex HmuTUV involved in hemin import. Responsible for energy coupling to the transport system. This is Hemin import ATP-binding protein HmuV from Streptomyces coelicolor (strain ATCC BAA-471 / A3(2) / M145).